Consider the following 934-residue polypeptide: Serine/threonine-protein kinase PknD (934 aa).

The Protein kinase domain maps to 4–296; it reads YELIRLIGRG…ELRKALQPHL (293 aa). Residues 10-18 and Lys-33 each bind ATP; that span reads IGRGGMGEV. The Proton acceptor role is filled by Asp-138.

The protein belongs to the protein kinase superfamily. Ser/Thr protein kinase family. In terms of processing, autophosphorylated on serine and threonine residues.

The enzyme catalyses L-seryl-[protein] + ATP = O-phospho-L-seryl-[protein] + ADP + H(+). It carries out the reaction L-threonyl-[protein] + ATP = O-phospho-L-threonyl-[protein] + ADP + H(+). In terms of biological role, together with the serine/threonine kinase Pkn1, may play a role in the specific interactions with host proteins during intracellular growth. This chain is Serine/threonine-protein kinase PknD, found in Chlamydia muridarum (strain MoPn / Nigg).